Here is a 474-residue protein sequence, read N- to C-terminus: MSTIMVDTNSELCILTPLDEDDLESPLSGEFLQDIVDIQDITQTIGDDGSTPFGASEHQFFGNSPGSIGSVSTDLTDTLSPASSPASITFPAASGSAEDAACKSLNLECRVCSDKASGFHYGVHACEGCKGFFRRTIRLKLVYDRCERMCKIQKKNRNKCQYCRFEKCLNVGMSHNAIRFGRMPRSEKAKLKAEVLMCDQDVKDSQMADLLSLARLIYDAYLKNFNMNKVKARAILTGKASNPPFVIHDMETLCMAEKTLVAKLVANGIQNKEAEVRIFHCCQCTSVETVTELTEFAKSIPGFTELDLNDQVTLLKYGVYEAMFAMLASVMNKDGMLVAYGNGFITREFLKSLRKPIGDMMEPKFEFAMKFNALELDDSDLSLFVAALICCGDRPGLVNIPSIEKMQESIVHVLKLHLQSNHPDDSFLFPKLLQKMADLRQLVTEHAQLVQTIKKTETDAALHPLLQEIYRDMY.

A DNA-binding region (nuclear receptor) is located at residues 106-180 (NLECRVCSDK…VGMSHNAIRF (75 aa)). 2 NR C4-type zinc fingers span residues 109 to 129 (CRVC…CEGC) and 146 to 168 (CERM…FEKC). The NR LBD domain maps to 245–472 (FVIHDMETLC…HPLLQEIYRD (228 aa)).

This sequence belongs to the nuclear hormone receptor family. NR1 subfamily. As to quaternary structure, heterodimer with the retinoid X receptor. In terms of tissue distribution, ubiquitous.

It localises to the nucleus. Ligand-activated transcription factor. Key regulator of lipid metabolism. Activated by lipids. Receptor for peroxisome proliferators such as hypolipidemic drugs and fatty acids. Once activated by a ligand, the receptor binds to promoter elements of target genes. Regulates the peroxisomal beta-oxidation pathway of fatty acids. The protein is Peroxisome proliferator-activated receptor alpha (ppara) of Xenopus laevis (African clawed frog).